A 427-amino-acid chain; its full sequence is Trigger factor (427 aa).

One can recognise a PPIase FKBP-type domain in the interval 163–248; sequence GDIAVIDFKG…IKSIKVKELP (86 aa).

It belongs to the FKBP-type PPIase family. Tig subfamily.

The protein resides in the cytoplasm. It carries out the reaction [protein]-peptidylproline (omega=180) = [protein]-peptidylproline (omega=0). Functionally, involved in protein export. Acts as a chaperone by maintaining the newly synthesized protein in an open conformation. Functions as a peptidyl-prolyl cis-trans isomerase. The protein is Trigger factor of Clostridium beijerinckii (strain ATCC 51743 / NCIMB 8052) (Clostridium acetobutylicum).